Here is a 260-residue protein sequence, read N- to C-terminus: Acyl-coenzyme A diphosphatase FITM2 (260 aa).

Over 1–23 (MERLENCAQMFQRRFLNESFRRH) the chain is Cytoplasmic. A helical membrane pass occupies residues 24–44 (CPVLLACIVLGGSLLKELCPL). At 45–57 (PDSYWNNKRNVLN) the chain is on the lumenal side. The chain crosses the membrane as a helical span at residues 58–78 (VYFVKFSWGWTLWLLLPFIAL). The Cytoplasmic portion of the chain corresponds to 79–93 (TNYKLTRSTTKVLRR). The chain crosses the membrane as a helical span at residues 94–114 (LSSLLVSTLIWYLCTNLFLYI). Residues 115-145 (ENITGSCYESEAMSDPKEHQDRRECRLHSGY) lie on the Lumenal side of the membrane. Residues 146–166 (WHGFDISGHCFLLSYCILLIL) form a helical membrane-spanning segment. His154 is an active-site residue. Topologically, residues 167–189 (EETSIISNIRFERHWHRMAINAQ) are cytoplasmic. A run of 2 helical transmembrane segments spans residues 190–210 (FAALSILVIIWVWMFLCTAVY) and 211–231 (FHNIFQKVIGTAFGILAWYIT). Residue His212 is part of the active site. Topologically, residues 232-260 (YRWWYLQPISPGLPPASASRSGKEPIYRN) are cytoplasmic.

Belongs to the FIT family. FIT2 subfamily.

It is found in the endoplasmic reticulum membrane. It catalyses the reaction an acyl-CoA + H2O = an acyl-4'-phosphopantetheine + adenosine 3',5'-bisphosphate + 2 H(+). Its function is as follows. Fatty acyl-coenzyme A (CoA) diphosphatase that hydrolyzes fatty acyl-CoA to yield acyl-4'-phosphopantetheine and adenosine 3',5'-bisphosphate. Preferentially hydrolyzes unsaturated long-chain acyl-CoA substrates in the endoplasmic reticulum (ER) lumen. This catalytic activity is required for maintaining ER structure and for lipid droplets (LDs) biogenesis, which are lipid storage organelles involved in maintaining lipid and energy homeostasis. May directly bind to diacylglycerol (DAGs) and triacylglycerol, which is also important for LD biogenesis. May support directional budding of nacent LDs from the ER into the cytosol by reducing DAG levels at sites of LD formation. May play a role in the regulation of cell morphology, ER morphology and cytoskeletal organization. This is Acyl-coenzyme A diphosphatase FITM2 from Xenopus tropicalis (Western clawed frog).